A 319-amino-acid chain; its full sequence is Phosphatidylglycerol--prolipoprotein diacylglyceryl transferase (319 aa).

3 helical membrane-spanning segments follow: residues 21–41, 50–70, and 98–118; these read PIPI…AIWL, GGNP…GIIG, and NGGL…AVFF. Position 144 (R144) interacts with a 1,2-diacyl-sn-glycero-3-phospho-(1'-sn-glycerol). Helical transmembrane passes span 191 to 211 and 254 to 274; these read VHPT…LLMW and INTI…FLLK. Residues 295–319 are disordered; the sequence is AVASPDGKPLPKAGEGIDGETPSTR.

The protein belongs to the Lgt family.

The protein localises to the cell membrane. It catalyses the reaction L-cysteinyl-[prolipoprotein] + a 1,2-diacyl-sn-glycero-3-phospho-(1'-sn-glycerol) = an S-1,2-diacyl-sn-glyceryl-L-cysteinyl-[prolipoprotein] + sn-glycerol 1-phosphate + H(+). It participates in protein modification; lipoprotein biosynthesis (diacylglyceryl transfer). In terms of biological role, catalyzes the transfer of the diacylglyceryl group from phosphatidylglycerol to the sulfhydryl group of the N-terminal cysteine of a prolipoprotein, the first step in the formation of mature lipoproteins. In Corynebacterium glutamicum (strain R), this protein is Phosphatidylglycerol--prolipoprotein diacylglyceryl transferase.